The following is a 411-amino-acid chain: Histone-lysine N-methyltransferase SUV39H1-A (411 aa).

Residues 43–101 (YEVEYLCNYKKHKGREFFLVKWKGYEESENTWEPLKNLKCPILLHQFRKDMKAALLQAN) enclose the Chromo domain. The 62-residue stretch at 178–239 (VGCECEDCVS…DCANRVVQRG (62 aa)) folds into the Pre-SET domain. Cys-180, Cys-182, Cys-185, Cys-193, Cys-194, Cys-221, Cys-225, Cys-227, and Cys-231 together coordinate Zn(2+). The SET domain maps to 242–365 (YDLCIFKTDN…AGEELTFDYK (124 aa)). S-adenosyl-L-methionine-binding positions include 253–255 (RGW), Tyr-296, and 322–323 (NH). Residues Cys-325, Cys-399, Cys-401, and Cys-406 each coordinate Zn(2+). The 17-residue stretch at 395-411 (VHMECKCGVRNCRKYLF) folds into the Post-SET domain.

This sequence belongs to the class V-like SAM-binding methyltransferase superfamily. Histone-lysine methyltransferase family. Suvar3-9 subfamily. Expressed ubuitiously.

The protein localises to the nucleus. It is found in the chromosome. Its subcellular location is the centromere. It catalyses the reaction N(6)-methyl-L-lysyl(9)-[histone H3] + S-adenosyl-L-methionine = N(6),N(6)-dimethyl-L-lysyl(9)-[histone H3] + S-adenosyl-L-homocysteine + H(+). It carries out the reaction N(6),N(6)-dimethyl-L-lysyl(9)-[histone H3] + S-adenosyl-L-methionine = N(6),N(6),N(6)-trimethyl-L-lysyl(9)-[histone H3] + S-adenosyl-L-homocysteine + H(+). Its function is as follows. Histone methyltransferase that specifically trimethylates 'Lys-9' of histone H3 using monomethylated H3 'Lys-9' as substrate. H3 'Lys-9' trimethylation represents a specific tag for epigenetic transcriptional repression by recruiting HP1 (CBX1, CBX3 and/or CBX5) proteins to methylated histones. Mainly functions in heterochromatin regions, thereby playing a central role in the establishment of constitutive heterochromatin at pericentric and telomere regions. H3 'Lys-9' trimethylation is also required to direct DNA methylation at pericentric repeats. SUV39H1 is targeted to histone H3 via its interaction with RB1 and is involved in many processes, such as regulation of organ-specific terminal differentiation during development. This is Histone-lysine N-methyltransferase SUV39H1-A (suv39h1a) from Danio rerio (Zebrafish).